We begin with the raw amino-acid sequence, 336 residues long: Phosphate acyltransferase (336 aa).

Belongs to the PlsX family. In terms of assembly, homodimer. Probably interacts with PlsY.

It localises to the cytoplasm. It carries out the reaction a fatty acyl-[ACP] + phosphate = an acyl phosphate + holo-[ACP]. It participates in lipid metabolism; phospholipid metabolism. Catalyzes the reversible formation of acyl-phosphate (acyl-PO(4)) from acyl-[acyl-carrier-protein] (acyl-ACP). This enzyme utilizes acyl-ACP as fatty acyl donor, but not acyl-CoA. This chain is Phosphate acyltransferase, found in Pseudomonas fluorescens (strain ATCC BAA-477 / NRRL B-23932 / Pf-5).